Reading from the N-terminus, the 144-residue chain is Large ribosomal subunit protein uL15 (144 aa).

The interval Met1–Leu57 is disordered. Residues Arg21 to Gly31 show a composition bias toward gly residues. A compositionally biased stretch (basic residues) spans Gly32–Gly44.

The protein belongs to the universal ribosomal protein uL15 family. Part of the 50S ribosomal subunit.

Its function is as follows. Binds to the 23S rRNA. The chain is Large ribosomal subunit protein uL15 from Vibrio cholerae serotype O1 (strain ATCC 39315 / El Tor Inaba N16961).